Reading from the N-terminus, the 438-residue chain is Thymidine phosphorylase (438 aa).

The protein belongs to the thymidine/pyrimidine-nucleoside phosphorylase family. As to quaternary structure, homodimer.

The enzyme catalyses thymidine + phosphate = 2-deoxy-alpha-D-ribose 1-phosphate + thymine. Its pathway is pyrimidine metabolism; dTMP biosynthesis via salvage pathway; dTMP from thymine: step 1/2. The enzymes which catalyze the reversible phosphorolysis of pyrimidine nucleosides are involved in the degradation of these compounds and in their utilization as carbon and energy sources, or in the rescue of pyrimidine bases for nucleotide synthesis. The sequence is that of Thymidine phosphorylase from Burkholderia orbicola (strain AU 1054).